The chain runs to 160 residues: Cytochrome b6-f complex subunit 4 (160 aa).

Transmembrane regions (helical) follow at residues 36-56 (LLYI…GLAV), 95-115 (LLGV…PFLE), and 131-151 (TVFL…TLPI).

The protein belongs to the cytochrome b family. PetD subfamily. In terms of assembly, the 4 large subunits of the cytochrome b6-f complex are cytochrome b6, subunit IV (17 kDa polypeptide, petD), cytochrome f and the Rieske protein, while the 4 small subunits are petG, petL, petM and petN. The complex functions as a dimer.

It is found in the plastid. The protein localises to the chloroplast thylakoid membrane. Its function is as follows. Component of the cytochrome b6-f complex, which mediates electron transfer between photosystem II (PSII) and photosystem I (PSI), cyclic electron flow around PSI, and state transitions. The sequence is that of Cytochrome b6-f complex subunit 4 from Lotus japonicus (Lotus corniculatus var. japonicus).